We begin with the raw amino-acid sequence, 198 residues long: Ribonuclease 3-like protein 1 (198 aa).

A compositionally biased stretch (basic and acidic residues) spans 85 to 110 (KKLAPKPDEEHTTTTKPISKDDESKT). The disordered stretch occupies residues 85 to 115 (KKLAPKPDEEHTTTTKPISKDDESKTRRGSA). The DRBM domain occupies 114–191 (SAKSVLHEMC…AEGALWYLEH (78 aa)).

The chain is Ribonuclease 3-like protein 1 (RTL1) from Arabidopsis thaliana (Mouse-ear cress).